Consider the following 114-residue polypeptide: Large ribosomal subunit protein uL22 (114 aa).

It belongs to the universal ribosomal protein uL22 family. In terms of assembly, part of the 50S ribosomal subunit.

This protein binds specifically to 23S rRNA; its binding is stimulated by other ribosomal proteins, e.g. L4, L17, and L20. It is important during the early stages of 50S assembly. It makes multiple contacts with different domains of the 23S rRNA in the assembled 50S subunit and ribosome. Its function is as follows. The globular domain of the protein is located near the polypeptide exit tunnel on the outside of the subunit, while an extended beta-hairpin is found that lines the wall of the exit tunnel in the center of the 70S ribosome. This Streptococcus gordonii (strain Challis / ATCC 35105 / BCRC 15272 / CH1 / DL1 / V288) protein is Large ribosomal subunit protein uL22.